The sequence spans 505 residues: Deoxyguanosinetriphosphate triphosphohydrolase (505 aa).

The 208-residue stretch at R66–C273 folds into the HD domain.

Belongs to the dGTPase family. Type 1 subfamily. In terms of assembly, homotetramer. Mg(2+) is required as a cofactor.

The catalysed reaction is dGTP + H2O = 2'-deoxyguanosine + triphosphate + H(+). DGTPase preferentially hydrolyzes dGTP over the other canonical NTPs. This is Deoxyguanosinetriphosphate triphosphohydrolase from Yersinia enterocolitica serotype O:8 / biotype 1B (strain NCTC 13174 / 8081).